A 235-amino-acid chain; its full sequence is uncharacterized protein (235 aa).

3 helical membrane-spanning segments follow: residues 41 to 61 (IFWH…IYRL), 71 to 91 (LRTF…IEFP), and 129 to 149 (IGII…TPTI).

The protein localises to the membrane. This is an uncharacterized protein from Schizosaccharomyces pombe (strain 972 / ATCC 24843) (Fission yeast).